The following is a 324-amino-acid chain: Mevalonate kinase (324 aa).

Residue 103-113 participates in ATP binding; it reads PPRAGLGSSAA. Asp154 acts as the Proton acceptor in catalysis.

It belongs to the GHMP kinase family. Mevalonate kinase subfamily. As to quaternary structure, homodimer. Mg(2+) is required as a cofactor.

Its subcellular location is the cytoplasm. It catalyses the reaction (R)-mevalonate + ATP = (R)-5-phosphomevalonate + ADP + H(+). It functions in the pathway isoprenoid biosynthesis; isopentenyl diphosphate biosynthesis via mevalonate pathway; isopentenyl diphosphate from (R)-mevalonate: step 1/3. Functionally, catalyzes the phosphorylation of (R)-mevalonate (MVA) to (R)-mevalonate 5-phosphate (MVAP). Functions in the mevalonate (MVA) pathway leading to isopentenyl diphosphate (IPP), a key precursor for the biosynthesis of isoprenoid compounds such as archaeal membrane lipids. This chain is Mevalonate kinase, found in Aeropyrum pernix (strain ATCC 700893 / DSM 11879 / JCM 9820 / NBRC 100138 / K1).